The primary structure comprises 142 residues: Transcriptional regulator MraZ (142 aa).

2 consecutive SpoVT-AbrB domains span residues serine 5–glutamate 51 and alanine 77–serine 120.

The protein belongs to the MraZ family. Forms oligomers.

It is found in the cytoplasm. It localises to the nucleoid. The polypeptide is Transcriptional regulator MraZ (Bordetella bronchiseptica (strain ATCC BAA-588 / NCTC 13252 / RB50) (Alcaligenes bronchisepticus)).